The sequence spans 380 residues: Large ribosomal subunit protein mL38 (380 aa).

The transit peptide at 1-26 (MAAPWWRAALCECRRWRGFSTSAVLG) directs the protein to the mitochondrion. Residues 99–127 (RTQQLLERKQAIQELRANVEEERAARLRT) adopt a coiled-coil conformation.

Belongs to the phosphatidylethanolamine-binding protein family. Mitochondrion-specific ribosomal protein mL38 subfamily. As to quaternary structure, component of the mitochondrial large ribosomal subunit (mt-LSU). Mature mammalian 55S mitochondrial ribosomes consist of a small (28S) and a large (39S) subunit. The 28S small subunit contains a 12S ribosomal RNA (12S mt-rRNA) and 30 different proteins. The 39S large subunit contains a 16S rRNA (16S mt-rRNA), a copy of mitochondrial valine transfer RNA (mt-tRNA(Val)), which plays an integral structural role, and 52 different proteins. mL38 is located at the central protuberance.

It is found in the mitochondrion. This chain is Large ribosomal subunit protein mL38 (MRPL38), found in Homo sapiens (Human).